Here is a 300-residue protein sequence, read N- to C-terminus: MPATRLDGKKIAAEIRSEVAADVETFVSGGNPPPQLAAVLVGEDPASQVYVRNKERACAKAGIASRLDRMPAATTQAELLAKVAELNADPAVSGILVQLPLPSKANGGTGIDERAVLDAIDPIKDVDAFSPVNVGLLMQGRPRFLPCTPHGIVQLLHRTGIETSGKHVVVVGRSDIVGKPMAMMLAQKDSTCGPAVANATVTIAHSRTSNLAEICRQADILIAAVGRPEMITAEMIQPGAVVIDVGINRVGDKLVGDVAFDEAEAVASAITPVPGGVGPLTIAMLLHNTLMAAKMQAASN.

NADP(+) contacts are provided by residues 172–174 (GRS), serine 206, and isoleucine 247.

The protein belongs to the tetrahydrofolate dehydrogenase/cyclohydrolase family. As to quaternary structure, homodimer.

It carries out the reaction (6R)-5,10-methylene-5,6,7,8-tetrahydrofolate + NADP(+) = (6R)-5,10-methenyltetrahydrofolate + NADPH. It catalyses the reaction (6R)-5,10-methenyltetrahydrofolate + H2O = (6R)-10-formyltetrahydrofolate + H(+). Its pathway is one-carbon metabolism; tetrahydrofolate interconversion. Functionally, catalyzes the oxidation of 5,10-methylenetetrahydrofolate to 5,10-methenyltetrahydrofolate and then the hydrolysis of 5,10-methenyltetrahydrofolate to 10-formyltetrahydrofolate. The chain is Bifunctional protein FolD from Rhodopirellula baltica (strain DSM 10527 / NCIMB 13988 / SH1).